The sequence spans 301 residues: Small ribosomal subunit protein uS3 (301 aa).

A KH type-2 domain is found at 39–107 (VREYLKAKLK…PVAVNIEEVR (69 aa)). Positions 211-301 (GESPGAKLDA…AAAADGTKTE (91 aa)) are disordered. The span at 224 to 244 (DEERKPRGPRRDARPGSDRPA) shows a compositional bias: basic and acidic residues. Residues 245-257 (PRGARAPRAPAGG) show a composition bias toward low complexity.

This sequence belongs to the universal ribosomal protein uS3 family. In terms of assembly, part of the 30S ribosomal subunit. Forms a tight complex with proteins S10 and S14.

Binds the lower part of the 30S subunit head. Binds mRNA in the 70S ribosome, positioning it for translation. The sequence is that of Small ribosomal subunit protein uS3 from Polaromonas sp. (strain JS666 / ATCC BAA-500).